A 280-amino-acid chain; its full sequence is 2-dehydro-3-deoxyphosphooctonate aldolase (280 aa).

This sequence belongs to the KdsA family.

It is found in the cytoplasm. The catalysed reaction is D-arabinose 5-phosphate + phosphoenolpyruvate + H2O = 3-deoxy-alpha-D-manno-2-octulosonate-8-phosphate + phosphate. It participates in carbohydrate biosynthesis; 3-deoxy-D-manno-octulosonate biosynthesis; 3-deoxy-D-manno-octulosonate from D-ribulose 5-phosphate: step 2/3. Its pathway is bacterial outer membrane biogenesis; lipopolysaccharide biosynthesis. The chain is 2-dehydro-3-deoxyphosphooctonate aldolase from Coxiella burnetii (strain CbuK_Q154) (Coxiella burnetii (strain Q154)).